The chain runs to 152 residues: Ribonuclease H (152 aa).

Positions 1–142 constitute an RNase H type-1 domain; the sequence is MKEVTIYTDG…CDELARAAIA (142 aa). Aspartate 9, glutamate 47, aspartate 69, and aspartate 134 together coordinate Mg(2+).

Belongs to the RNase H family. In terms of assembly, monomer. The cofactor is Mg(2+).

The protein localises to the cytoplasm. The catalysed reaction is Endonucleolytic cleavage to 5'-phosphomonoester.. Functionally, endonuclease that specifically degrades the RNA of RNA-DNA hybrids. This Moorella thermoacetica (strain ATCC 39073 / JCM 9320) protein is Ribonuclease H.